A 177-amino-acid polypeptide reads, in one-letter code: Nucleoside triphosphate/diphosphate phosphatase (177 aa).

The active-site Proton donor is the Arg23. Residues Asn87, Asp103, Asp105, Asp107, Asp120, and Glu123 each coordinate Mg(2+).

The protein belongs to the Ntdp family. Requires Mg(2+) as cofactor.

It catalyses the reaction a ribonucleoside 5'-triphosphate + H2O = a ribonucleoside 5'-diphosphate + phosphate + H(+). The catalysed reaction is a ribonucleoside 5'-diphosphate + H2O = a ribonucleoside 5'-phosphate + phosphate + H(+). Has nucleoside phosphatase activity towards nucleoside triphosphates and nucleoside diphosphates. This chain is Nucleoside triphosphate/diphosphate phosphatase, found in Streptococcus thermophilus (strain ATCC BAA-491 / LMD-9).